The chain runs to 313 residues: Probable cell division protein WhiA (313 aa).

Positions 280–313 (SLKELGAMLNPPIGKSGVNHRLKKLCSIADGLRQ) form a DNA-binding region, H-T-H motif.

It belongs to the WhiA family.

Its function is as follows. Involved in cell division and chromosome segregation. The protein is Probable cell division protein WhiA of Lachnoclostridium phytofermentans (strain ATCC 700394 / DSM 18823 / ISDg) (Clostridium phytofermentans).